Consider the following 267-residue polypeptide: FCS-Like Zinc finger 8 (267 aa).

2 disordered regions span residues 1–29 (MLKK…KTTP) and 124–156 (DSPI…GSPR). Polar residues-rich tracts occupy residues 15–28 (ETNQ…SKTT) and 126–141 (PISS…NSQP). The FLZ-type zinc-finger motif lies at 221–265 (SFLSCCCNCKKSLGPRDDIFMYRGDRAFCSSECRSIEMMMSEEND).

The protein belongs to the FLZ family. Interacts with KIN10 and KIN11 via its FLZ-type zinc finger domain. Interacts with KINB1, KINB2, KINB3 and SNF4 via its N-terminal part. Interacts with HB21/ZHD3.

May act as an adapter to facilitate the interaction of SnRK1 complex with effector proteins, conferring tissue- and stimulus-type specific differences in the SnRK1 regulation pathway. The sequence is that of FCS-Like Zinc finger 8 from Arabidopsis thaliana (Mouse-ear cress).